The primary structure comprises 509 residues: Dihydrolipoyl dehydrogenase, mitochondrial (509 aa).

The N-terminal 35 residues, Met-1–Tyr-35, are a transit peptide targeting the mitochondrion. N6-acetyllysine; alternate is present on Lys-66. N6-succinyllysine; alternate is present on Lys-66. Residues Glu-71–Cys-80 and Lys-89 each bind FAD. Cys-80 and Cys-85 form a disulfide bridge. N6-acetyllysine; alternate occurs at positions 104, 122, 132, and 143. Lys-104, Lys-122, Lys-132, and Lys-143 each carry N6-succinyllysine; alternate. Gly-154 lines the FAD pocket. An N6-succinyllysine mark is found at Lys-159 and Lys-166. Thr-183–Ser-185 provides a ligand contact to FAD. NAD(+) is bound by residues Gly-220–Glu-227 and Glu-243. 2 positions are modified to N6-succinyllysine: Lys-273 and Lys-277. Val-278 is a binding site for NAD(+). Residues Ser-285 and Ser-297 each carry the phosphoserine modification. Gly-314 contributes to the NAD(+) binding site. Lys-334 bears the N6-acetyllysine; alternate mark. Position 334 is an N6-succinyllysine; alternate (Lys-334). Lys-346 carries the post-translational modification N6-acetyllysine. FAD-binding positions include Asp-355 and Met-361 to His-364. The residue at position 410 (Lys-410) is an N6-acetyllysine; alternate. Lys-410 carries the post-translational modification N6-succinyllysine; alternate. An N6-acetyllysine mark is found at Lys-417 and Lys-420. N6-succinyllysine is present on Lys-430. Catalysis depends on His-487, which acts as the Proton acceptor. Lys-505 is modified (N6-acetyllysine; alternate). Position 505 is an N6-succinyllysine; alternate (Lys-505).

It belongs to the class-I pyridine nucleotide-disulfide oxidoreductase family. Homodimer. Part of the multimeric pyruvate dehydrogenase complex that contains multiple copies of pyruvate dehydrogenase (subunits PDHA (PDHA1 or PDHA2) and PDHB, E1), dihydrolipoamide acetyltransferase (DLAT, E2) and lipoamide dehydrogenase (DLD, E3). These subunits are bound to an inner core composed of about 48 DLAT and 12 PDHX molecules (by non covalent bonds). The 2-oxoglutarate dehydrogenase complex is composed of OGDH (2-oxoglutarate dehydrogenase; E1), DLST (dihydrolipoamide succinyltransferase; E2), DLD (dihydrolipoamide dehydrogenase; E3) and the assembly factor KGD4. It contains multiple copies of the three enzymatic components (E1, E2 and E3). In the nucleus, the 2-oxoglutarate dehydrogenase complex associates with KAT2A. Interacts with PDHX. It depends on FAD as a cofactor. Tyrosine phosphorylated. Expressed in liver (at protein level).

The protein localises to the mitochondrion matrix. It is found in the nucleus. The protein resides in the cell projection. Its subcellular location is the cilium. It localises to the flagellum. The protein localises to the cytoplasmic vesicle. It is found in the secretory vesicle. The protein resides in the acrosome. It catalyses the reaction N(6)-[(R)-dihydrolipoyl]-L-lysyl-[protein] + NAD(+) = N(6)-[(R)-lipoyl]-L-lysyl-[protein] + NADH + H(+). In terms of biological role, lipoamide dehydrogenase is a component of the glycine cleavage system as well as an E3 component of three alpha-ketoacid dehydrogenase complexes (pyruvate-, alpha-ketoglutarate-, and branched-chain amino acid-dehydrogenase complex). The 2-oxoglutarate dehydrogenase complex is mainly active in the mitochondrion. A fraction of the 2-oxoglutarate dehydrogenase complex also localizes in the nucleus and is required for lysine succinylation of histones: associates with KAT2A on chromatin and provides succinyl-CoA to histone succinyltransferase KAT2A. In monomeric form may have additional moonlighting function as serine protease. Involved in the hyperactivation of spermatazoa during capacitation and in the spermatazoal acrosome reaction. The chain is Dihydrolipoyl dehydrogenase, mitochondrial (Dld) from Mus musculus (Mouse).